We begin with the raw amino-acid sequence, 446 residues long: MTKTAAVILAAGQGTRMKSALPKVLHPLAGRPMVAHLIHALGAVAPSRTVVVIGPGMESVADRVAPLPTVLQAERLGTAHAVAQAGEALAGFDGTVLILYGDTPLITPETLTRMVEARLAAEDPAVVVLGFRPADPLQYGRLITSPAGLEAIVEYKDATAEQRAIGLCNSGVMAVDGRVLFALLAAVGNDNAKGEYYLTDIVALARGMGRACAVVEGAAEELLGVNSRSELAAAEAVIQGRLREKAMEGGATLTAPETVFFSADTRLGRDVSIGPFVTFGPGVEIGDGVEIKGFCHIEGARVAAKATLGPYARLRPGATIAEGAHVGNFVEIKNSAVEQGAKVNHLTYIGDARVGARANIGAGTITCNYDGFGKYHTDIGEGAFIGSNTALVAPVSIGAGAIIGAGSTIARDVEADALALTRGPHEVRPGWAAKFRAHMRRLTGKN.

Residues 1 to 228 are pyrophosphorylase; it reads MTKTAAVILA…AEELLGVNSR (228 aa). Residues 9–12, K23, Q72, 77–78, 100–102, G140, E154, N169, and N226 each bind UDP-N-acetyl-alpha-D-glucosamine; these read LAAG, GT, and YGD. Position 102 (D102) interacts with Mg(2+). Residue N226 coordinates Mg(2+). A linker region spans residues 229–249; sequence SELAAAEAVIQGRLREKAMEG. Positions 250-446 are N-acetyltransferase; it reads GATLTAPETV…AHMRRLTGKN (197 aa). UDP-N-acetyl-alpha-D-glucosamine contacts are provided by R315 and K333. The Proton acceptor role is filled by H345. Residues Y348 and N359 each coordinate UDP-N-acetyl-alpha-D-glucosamine. Residues A362, 368–369, S387, A405, and R422 contribute to the acetyl-CoA site; that span reads NY.

This sequence in the N-terminal section; belongs to the N-acetylglucosamine-1-phosphate uridyltransferase family. In the C-terminal section; belongs to the transferase hexapeptide repeat family. As to quaternary structure, homotrimer. Mg(2+) is required as a cofactor.

The protein resides in the cytoplasm. The catalysed reaction is alpha-D-glucosamine 1-phosphate + acetyl-CoA = N-acetyl-alpha-D-glucosamine 1-phosphate + CoA + H(+). The enzyme catalyses N-acetyl-alpha-D-glucosamine 1-phosphate + UTP + H(+) = UDP-N-acetyl-alpha-D-glucosamine + diphosphate. It participates in nucleotide-sugar biosynthesis; UDP-N-acetyl-alpha-D-glucosamine biosynthesis; N-acetyl-alpha-D-glucosamine 1-phosphate from alpha-D-glucosamine 6-phosphate (route II): step 2/2. The protein operates within nucleotide-sugar biosynthesis; UDP-N-acetyl-alpha-D-glucosamine biosynthesis; UDP-N-acetyl-alpha-D-glucosamine from N-acetyl-alpha-D-glucosamine 1-phosphate: step 1/1. Its pathway is bacterial outer membrane biogenesis; LPS lipid A biosynthesis. In terms of biological role, catalyzes the last two sequential reactions in the de novo biosynthetic pathway for UDP-N-acetylglucosamine (UDP-GlcNAc). The C-terminal domain catalyzes the transfer of acetyl group from acetyl coenzyme A to glucosamine-1-phosphate (GlcN-1-P) to produce N-acetylglucosamine-1-phosphate (GlcNAc-1-P), which is converted into UDP-GlcNAc by the transfer of uridine 5-monophosphate (from uridine 5-triphosphate), a reaction catalyzed by the N-terminal domain. The chain is Bifunctional protein GlmU from Rhodospirillum rubrum (strain ATCC 11170 / ATH 1.1.1 / DSM 467 / LMG 4362 / NCIMB 8255 / S1).